The chain runs to 190 residues: Potassium-transporting ATPase KdpC subunit (190 aa).

A helical membrane pass occupies residues 13–33; sequence VGFLLLTLMCGVVYPGIVTIF.

The protein belongs to the KdpC family. The system is composed of three essential subunits: KdpA, KdpB and KdpC.

It is found in the cell membrane. Part of the high-affinity ATP-driven potassium transport (or Kdp) system, which catalyzes the hydrolysis of ATP coupled with the electrogenic transport of potassium into the cytoplasm. This subunit acts as a catalytic chaperone that increases the ATP-binding affinity of the ATP-hydrolyzing subunit KdpB by the formation of a transient KdpB/KdpC/ATP ternary complex. The polypeptide is Potassium-transporting ATPase KdpC subunit (Listeria monocytogenes serotype 4b (strain CLIP80459)).